A 289-amino-acid polypeptide reads, in one-letter code: Glyoxylate/succinic semialdehyde reductase 1 (289 aa).

M1 bears the N-acetylmethionine mark. Residues 4–18 and T95 each bind NADP(+); that span reads GFLG…MSMN. K170 is a catalytic residue. Residue K238 coordinates NADP(+).

The protein belongs to the HIBADH-related family. NP60 subfamily.

The protein resides in the cytoplasm. It localises to the cytosol. The catalysed reaction is glycolate + NADP(+) = glyoxylate + NADPH + H(+). It carries out the reaction 4-hydroxybutanoate + NADP(+) = succinate semialdehyde + NADPH + H(+). With respect to regulation, the ratio of NADPH/NADP(+) may regulate enzymatic activity. Its function is as follows. Catalyzes the NADPH-dependent reduction of glyoxylate to glycolate as well as succinic semialdehyde (SSA) to gamma-hydroxybutyrate in vitro. May function in redox homeostasis and play a role in oxidative stress tolerance by detoxifying glyoxylate and SSA generated in glycolate metabolism and GABA metabolism, respectively. The protein is Glyoxylate/succinic semialdehyde reductase 1 (GLYR1) of Arabidopsis thaliana (Mouse-ear cress).